A 101-amino-acid polypeptide reads, in one-letter code: NAD(P)H-quinone oxidoreductase subunit 4L, chloroplastic (101 aa).

3 consecutive transmembrane segments (helical) span residues 2-22 (MLEH…YGLI), 32-52 (MCLE…SDFF), and 61-81 (IFSI…LAIV).

This sequence belongs to the complex I subunit 4L family. NDH is composed of at least 16 different subunits, 5 of which are encoded in the nucleus.

The protein resides in the plastid. The protein localises to the chloroplast thylakoid membrane. The enzyme catalyses a plastoquinone + NADH + (n+1) H(+)(in) = a plastoquinol + NAD(+) + n H(+)(out). It carries out the reaction a plastoquinone + NADPH + (n+1) H(+)(in) = a plastoquinol + NADP(+) + n H(+)(out). NDH shuttles electrons from NAD(P)H:plastoquinone, via FMN and iron-sulfur (Fe-S) centers, to quinones in the photosynthetic chain and possibly in a chloroplast respiratory chain. The immediate electron acceptor for the enzyme in this species is believed to be plastoquinone. Couples the redox reaction to proton translocation, and thus conserves the redox energy in a proton gradient. In Guizotia abyssinica (Niger), this protein is NAD(P)H-quinone oxidoreductase subunit 4L, chloroplastic.